Here is a 688-residue protein sequence, read N- to C-terminus: Protein SDA1 homolog (688 aa).

Ser-232, Ser-234, and Ser-236 each carry phosphoserine. Residues 254–318 (KKSSKNKKKL…ERFEVKMMLM (65 aa)) adopt a coiled-coil conformation. Over residues 484–498 (VENEEENAEGDEDGW) the composition is skewed to acidic residues. The disordered stretch occupies residues 484 to 524 (VENEEENAEGDEDGWESASLSDEADSDGEWVDVHHSSDEEQ). Basic and acidic residues predominate over residues 514–524 (VDVHHSSDEEQ). Residues Ser-586 and Ser-596 each carry the phosphoserine modification. The interval 605–688 (KKPKSDKETR…ALLKKRKRMK (84 aa)) is disordered. The span at 668–681 (SFREKQLALRDALL) shows a compositional bias: basic and acidic residues.

It belongs to the SDA1 family.

The protein localises to the nucleus. Its subcellular location is the nucleolus. Its function is as follows. Required for 60S pre-ribosomal subunits export to the cytoplasm. In Bos taurus (Bovine), this protein is Protein SDA1 homolog (SDAD1).